Consider the following 662-residue polypeptide: Chromosomal replication initiator protein DnaA (662 aa).

The interval 1–93 is domain I, interacts with DnaA modulators; the sequence is MDDEQNVLAT…QVEGLGVRIA (93 aa). The segment at 93-322 is domain II; sequence AAPATPTAER…STPAPANSSA (230 aa). Positions 96-105 are enriched in low complexity; the sequence is ATPTAERAAA. Residues 96 to 294 form a disordered region; sequence ATPTAERAAA…SDGPVERDDE (199 aa). Positions 114-123 are enriched in basic and acidic residues; the sequence is SRPERPRGER. Low complexity predominate over residues 166 to 199; the sequence is PPAAEYTPAAEYTPAAEYTPAAEYSPEPEYTPAT. Basic and acidic residues-rich tracts occupy residues 236–248 and 261–290; these read TPRRDGHGPRRDA and PGDRPLRDTDRPLREPAAGHDVRESDGPVE. Positions 323-539 are domain III, AAA+ region; the sequence is SLNAKYTFET…GALIRVTAFA (217 aa). Positions 367, 369, 370, and 371 each coordinate ATP. The interval 540–662 is domain IV, binds dsDNA; the sequence is SLNGQPLDLS…LTARIKQRSR (123 aa).

The protein belongs to the DnaA family. As to quaternary structure, oligomerizes as a right-handed, spiral filament on DNA at oriC.

Its subcellular location is the cytoplasm. Plays an essential role in the initiation and regulation of chromosomal replication. ATP-DnaA binds to the origin of replication (oriC) to initiate formation of the DNA replication initiation complex once per cell cycle. Binds the DnaA box (a 9 base pair repeat at the origin) and separates the double-stranded (ds)DNA. Forms a right-handed helical filament on oriC DNA; dsDNA binds to the exterior of the filament while single-stranded (ss)DNA is stabiized in the filament's interior. The ATP-DnaA-oriC complex binds and stabilizes one strand of the AT-rich DNA unwinding element (DUE), permitting loading of DNA polymerase. After initiation quickly degrades to an ADP-DnaA complex that is not apt for DNA replication. Binds acidic phospholipids. This chain is Chromosomal replication initiator protein DnaA, found in Nocardia farcinica (strain IFM 10152).